We begin with the raw amino-acid sequence, 347 residues long: MGCCFTKRRKSEKAEGEEEQPKLYSWDQREKVDPKDYMFSGLKDETVGRLPGKVAGQQFVIQDCENCNIYIFDHSATITIDDCTNCVIFLGPVKGSVFFRNCRDCKCTLACQQFRVRDCRKLEVFLCCATQPIIESSTNIKFGCFQWYYPELAAQFKDAGLSIFNNIWSHVHDFTPVSGELNWSLLPENAVVQDYVPIPMTEEFKAVRISTEANRSIVPVSRGQRQKYSDESCLVVLFADDYTTANARKLIDEMVGKGFSLVQTKEMSMKTEDAQRVFQEKASDFLLLLNKGPVIALEFNGDDAVQECHLIVNGMFNGTKMFVSEKKETASGDVDSFYNFAEIQMGI.

Basic residues predominate over residues 1-11; that stretch reads MGCCFTKRRKS. The tract at residues 1–22 is disordered; that stretch reads MGCCFTKRRKSEKAEGEEEQPK. A lipid anchor (N-myristoyl glycine) is attached at glycine 2. Residue cysteine 3 is the site of S-palmitoyl cysteine attachment. Positions 21-176 constitute a C-CAP/cofactor C-like domain; sequence PKLYSWDQRE…IWSHVHDFTP (156 aa). Residues 95-96 and 112-115 each bind GTP; these read GS and QQFR.

This sequence belongs to the TBCC family. As to quaternary structure, found in a complex with ARL3, RP2 and UNC119 (or UNC119B); RP2 induces hydrolysis of GTP ARL3 in the complex, leading to the release of UNC119 (or UNC119B). Interacts with ARL3; interaction is direct and stimulated with the activated GTP-bound form of ARL3. In terms of processing, myristoylated on Gly-2; which may be required for membrane targeting. Palmitoylated on Cys-3; which may be required for plasma membrane targeting. In terms of tissue distribution, retina (at protein level).

It is found in the cell membrane. The protein resides in the cell projection. It localises to the cilium. Functionally, acts as a GTPase-activating protein (GAP) involved in trafficking between the Golgi and the ciliary membrane. Involved in localization of proteins, such as NPHP3, to the cilium membrane by inducing hydrolysis of GTP ARL3, leading to the release of UNC119 (or UNC119B). Acts as a GTPase-activating protein (GAP) for tubulin in concert with tubulin-specific chaperone C, but does not enhance tubulin heterodimerization. Acts as a guanine nucleotide dissociation inhibitor towards ADP-ribosylation factor-like proteins. This Mus musculus (Mouse) protein is Protein XRP2 (Rp2).